The following is a 490-amino-acid chain: Glutamate--tRNA ligase 1 (490 aa).

A 'HIGH' region motif is present at residues 27 to 37; that stretch reads PSPTGYLHIGG. Positions 254–258 match the 'KMSKS' region motif; it reads KLSKR. Lysine 257 is a binding site for ATP.

It belongs to the class-I aminoacyl-tRNA synthetase family. Glutamate--tRNA ligase type 1 subfamily. As to quaternary structure, monomer.

It is found in the cytoplasm. The enzyme catalyses tRNA(Glu) + L-glutamate + ATP = L-glutamyl-tRNA(Glu) + AMP + diphosphate. In terms of biological role, catalyzes the attachment of glutamate to tRNA(Glu) in a two-step reaction: glutamate is first activated by ATP to form Glu-AMP and then transferred to the acceptor end of tRNA(Glu). This is Glutamate--tRNA ligase 1 from Sphingopyxis alaskensis (strain DSM 13593 / LMG 18877 / RB2256) (Sphingomonas alaskensis).